The primary structure comprises 224 residues: Casparian strip membrane protein 1 (224 aa).

The segment at 1–22 (MSSGEPAAVSIPIHDHHGKAPA) is disordered. The Cytoplasmic portion of the chain corresponds to 1 to 62 (MSSGEPAAVS…RGDHHRGSRC (62 aa)). The chain crosses the membrane as a helical span at residues 63–83 (LAFLDFILRIAAFGPALAAAI). Topologically, residues 84 to 110 (STGTSDETLSVFTEFYQFRARFDDFPA) are extracellular. A helical membrane pass occupies residues 111–131 (FLFFLVANAIVAGYLVLSLPF). Topologically, residues 132 to 145 (SAVLVIRPQTIGLR) are cytoplasmic. The helical transmembrane segment at 146 to 166 (LLLLVCDMIMAAMLTAAASAA) threads the bilayer. Topologically, residues 167 to 200 (AAIVDLAHNGNLRANWVAICMQFHGFCQRTSGSV) are extracellular. The chain crosses the membrane as a helical span at residues 201 to 221 (VASFLTVVILMFLVILAACSI). Residues 222–224 (RKR) lie on the Cytoplasmic side of the membrane.

It belongs to the Casparian strip membrane proteins (CASP) family. Homodimer and heterodimers.

The protein localises to the cell membrane. Functionally, regulates membrane-cell wall junctions and localized cell wall deposition. Required for establishment of the Casparian strip membrane domain (CSD) and the subsequent formation of Casparian strips, a cell wall modification of the root endodermis that determines an apoplastic barrier between the intraorganismal apoplasm and the extraorganismal apoplasm and prevents lateral diffusion. The polypeptide is Casparian strip membrane protein 1 (Oryza sativa subsp. indica (Rice)).